The sequence spans 401 residues: F-box protein At2g43440 (401 aa).

In terms of domain architecture, F-box spans 7–53; it reads NTNSIYIVPELLEDIFLRLPLKSILKFKTVSRQWRSILESKLFVERR.

This chain is F-box protein At2g43440, found in Arabidopsis thaliana (Mouse-ear cress).